The sequence spans 99 residues: ATP synthase subunit c (99 aa).

The next 2 membrane-spanning stretches (helical) occupy residues 23 to 43 (GAGI…IGAL) and 78 to 98 (MGIA…LIFV).

The protein belongs to the ATPase C chain family. F-type ATPases have 2 components, F(1) - the catalytic core - and F(0) - the membrane proton channel. F(1) has five subunits: alpha(3), beta(3), gamma(1), delta(1), epsilon(1). F(0) has three main subunits: a(1), b(2) and c(10-14). The alpha and beta chains form an alternating ring which encloses part of the gamma chain. F(1) is attached to F(0) by a central stalk formed by the gamma and epsilon chains, while a peripheral stalk is formed by the delta and b chains.

It localises to the cell membrane. Functionally, f(1)F(0) ATP synthase produces ATP from ADP in the presence of a proton or sodium gradient. F-type ATPases consist of two structural domains, F(1) containing the extramembraneous catalytic core and F(0) containing the membrane proton channel, linked together by a central stalk and a peripheral stalk. During catalysis, ATP synthesis in the catalytic domain of F(1) is coupled via a rotary mechanism of the central stalk subunits to proton translocation. Its function is as follows. Key component of the F(0) channel; it plays a direct role in translocation across the membrane. A homomeric c-ring of between 10-14 subunits forms the central stalk rotor element with the F(1) delta and epsilon subunits. The protein is ATP synthase subunit c of Mycoplasma mobile (strain ATCC 43663 / 163K / NCTC 11711) (Mesomycoplasma mobile).